Here is a 126-residue protein sequence, read N- to C-terminus: Small ribosomal subunit protein uS13 (126 aa).

The interval Gly95–Lys126 is disordered.

This sequence belongs to the universal ribosomal protein uS13 family. As to quaternary structure, part of the 30S ribosomal subunit. Forms a loose heterodimer with protein S19. Forms two bridges to the 50S subunit in the 70S ribosome.

Its function is as follows. Located at the top of the head of the 30S subunit, it contacts several helices of the 16S rRNA. In the 70S ribosome it contacts the 23S rRNA (bridge B1a) and protein L5 of the 50S subunit (bridge B1b), connecting the 2 subunits; these bridges are implicated in subunit movement. Contacts the tRNAs in the A and P-sites. This is Small ribosomal subunit protein uS13 from Acidothermus cellulolyticus (strain ATCC 43068 / DSM 8971 / 11B).